Reading from the N-terminus, the 343-residue chain is Armadillo repeat-containing protein 10 (343 aa).

A helical transmembrane segment spans residues 5–27 (RGAGWVAAGLLLGAGACYCIYRL). The segment at 43 to 83 (SKSAGALEEGTSEGQLCGRSARPQTGGTWESQWSKTSQPED) is disordered. A Phosphoserine modification is found at S45. E50 bears the Phosphothreonine mark. Positions 64–82 (RPQTGGTWESQWSKTSQPE) are enriched in polar residues. T85 is modified (phosphothreonine). The stretch at 138-180 (GGIPIVANKINHSNQSIKEKALNALNNLSVNVENQIKIKIYIS) is one ARM repeat.

As to quaternary structure, interacts with the DNA-binding domain of p53/TP53. In terms of tissue distribution, expressed in all tissues tested with higher expression in placenta, liver, kidney, heart and brain.

The protein localises to the endoplasmic reticulum membrane. Its subcellular location is the mitochondrion outer membrane. May play a role in cell survival and cell growth. May suppress the transcriptional activity of p53/TP53. The polypeptide is Armadillo repeat-containing protein 10 (ARMC10) (Homo sapiens (Human)).